The chain runs to 295 residues: MRWPPWGSESQQADTPSPSTEQQAQQPPTAPAARPSRPNKDWNQSVNAFDWAAFTELRTIIPTAILTTAILGIVHIHRRYLRRFPDAVSIAPSYFRQRSILGQVTSVGDGDNFRLFHTPGGRLAGWGWLPWKKVPTSKKELRDKTVHVRLAGIDAPELAHFGRPAQPFAREAHQWLTAYLMTRRVRAYVHRQDQYQRVVASVYVRRALDFPPFRRRDVSYEMLRRGLATVYEAKAGAEFGGPGMERKYRRAEWWAKFRGLGLWKGFRRNKEWESPREFKTRMGLEDQTQGRENKS.

The segment at 1-41 (MRWPPWGSESQQADTPSPSTEQQAQQPPTAPAARPSRPNKD) is disordered. The span at 15–36 (TPSPSTEQQAQQPPTAPAARPS) shows a compositional bias: low complexity. Residues 60 to 76 (IIPTAILTTAILGIVHI) form a helical membrane-spanning segment. Residues 98 to 265 (RSILGQVTSV…KFRGLGLWKG (168 aa)) enclose the TNase-like domain. R149 is a catalytic residue. D154 contributes to the Ca(2+) binding site. Active-site residues include E157 and R197.

The protein belongs to the LCL3 family.

It localises to the mitochondrion. The protein localises to the membrane. This Aspergillus terreus (strain NIH 2624 / FGSC A1156) protein is Probable endonuclease lcl3 (lcl3).